The following is a 119-amino-acid chain: Small ribosomal subunit protein bS6 (119 aa).

The interval 99-119 (KKEKKQSRKEEGSENSEKVEE) is disordered.

Belongs to the bacterial ribosomal protein bS6 family.

Its function is as follows. Binds together with bS18 to 16S ribosomal RNA. The sequence is that of Small ribosomal subunit protein bS6 from Thermosipho melanesiensis (strain DSM 12029 / CIP 104789 / BI429).